The chain runs to 294 residues: Epimerase family protein SDR39U1 (294 aa).

NADP(+) contacts are provided by residues 31–32, 58–59, E77, R82, and V160; these read SR and LA.

This sequence belongs to the NAD(P)-dependent epimerase/dehydratase family. SDR39U1 subfamily.

Putative NADP-dependent oxidoreductase. In Bos taurus (Bovine), this protein is Epimerase family protein SDR39U1 (SDR39U1).